Consider the following 503-residue polypeptide: Sarpagan bridge enzyme 1 (503 aa).

A helical; Signal-anchor for type II membrane protein transmembrane segment spans residues 3–23; the sequence is ISVTTSIALATIVFFLYKLAT. A heme-binding site is contributed by Cys442.

This sequence belongs to the cytochrome P450 family. Heme serves as cofactor. In terms of tissue distribution, highly expressed in roots. Expressed at low levels in leaves, stems and flowers.

Its subcellular location is the endoplasmic reticulum membrane. It catalyses the reaction (19E)-geissoschizine + reduced [NADPH--hemoprotein reductase] + O2 = polyneuridine aldehyde + oxidized [NADPH--hemoprotein reductase] + 2 H2O + H(+). The catalysed reaction is tetrahydroalstonine + A + reduced [NADPH--hemoprotein reductase] + O2 = alstonine + AH2 + oxidized [NADPH--hemoprotein reductase] + 2 H2O + H(+). The enzyme catalyses ajmalicine + A + reduced [NADPH--hemoprotein reductase] + O2 = serpentine + AH2 + oxidized [NADPH--hemoprotein reductase] + 2 H2O + H(+). It participates in alkaloid biosynthesis; ajmaline biosynthesis. Functionally, monooxygenase involved in the biosynthesis of ajmaline-type monoterpenoid indole alkaloids (MIAs) natural products, important plant-derived pharmaceuticals used in the therapy of heart disorders. Converts by cyclization the strictosidine-derived geissoschizine to the sarpagan alkaloid polyneuridine aldehyde, precursor of vomilenine, an intermediate chemical in the biosynthesis of ajmaline. Converts by aromatization the tetrahydro-beta-carboline alkaloids tetrahydroalstonine and ajmalicine to the corresponding beta-carboline alkaloids alstonine and serpentine, respectively. This Rauvolfia serpentina (Serpentine wood) protein is Sarpagan bridge enzyme 1.